The primary structure comprises 250 residues: MSSSALKKWEIVIRFASSIPDLSLEISDAQTTTIHSLFKIVRNRIPECRDKQLKMVFQGRLLSPGFTVERAVRGNWQRDENDDPNIVQKAFIHCIVGPTLTEEELASQDQAQSGLNSNSESPDDLQNAQTGETLRGFDRLREAGFTETEVNNLRSQFHRLRGTNLDSLTEDAIREAEDDWIDNGGQNSSADELDMSYETLLAGVLIGFFGGAIACYFLWERTMFSLRMQLSILVGIICNFAYGLLHSYRW.

The disordered stretch occupies residues 105 to 130 (LASQDQAQSGLNSNSESPDDLQNAQT). Positions 107 to 130 (SQDQAQSGLNSNSESPDDLQNAQT) are enriched in polar residues. N-linked (GlcNAc...) asparagine glycosylation is present at Asn187. Helical transmembrane passes span 199–219 (TLLAGVLIGFFGGAIACYFLW) and 228–248 (MQLSILVGIICNFAYGLLHSY).

It belongs to the dsc3 family. As to quaternary structure, component of the DSC E3 ubiquitin ligase complex composed of dsc1, dsc2, dsc3 and dsc4.

It is found in the endoplasmic reticulum membrane. The protein localises to the golgi apparatus membrane. Its pathway is protein modification; protein ubiquitination. Component of the DSC E3 ubiquitin ligase complex which is required for the sre1 transcriptional activator proteolytic cleavage to release the soluble transcription factor from the membrane in low oxygen or sterol conditions. The complex also plays an important role in the multivesicular body (MVB) pathway and functions in a post-endoplasmic reticulum pathway for protein degradation. The chain is DSC E3 ubiquitin ligase complex subunit 3 (dsc3) from Schizosaccharomyces pombe (strain 972 / ATCC 24843) (Fission yeast).